A 791-amino-acid chain; its full sequence is MDIDVNQMEEKWIRYWDEKDVYRFEPADRDKVFAIDTPPPTVSGKMHMGHSFSYPHIDFIARYKRMRGYHVFFPWGFDDNGLPTERYVEKETGIKPSDSNVEEFIRLCKEISESSEKSLLEGWKRIGMSCYFKDYYVTSSPESIRISQSMFLDLVRKGRVYRDLAPSIRCPTCKTSISQIEMKDQEMHTKLVYINFSVGDRPLTIATTRPEMLGSCVAVFVNPDDARYRDLIGKEATVPIFGNHVRIMADASVDMNFGTGAEMVCTFGDQNDLDLWKKYNLPLKISIDKDGRMTEEAGPLKGLSISDARKKIVEILREGGHVVKEESIKHSVNTHERCGTPIEIFIEKQWFIKYLDLKDAFIENGRKIEWTPEYMRVRYENWVNGLKWDWLISRQRYYGVPFPVWYCADCGNTVYADESELPVDPRIQKPSKKCDRCGSTNLVPERDVMDTWATSSLTPRIALTHFGLFDKYYPEDLRGQGHDIISFWAFTTIARSKIHDDRIPWFRIMISGNVYDMYGEKMSKSKGNIVDIYSMIDKYGADALRFWASTVSQGDDIRIKDQDFTRGRRTVIKMYNAKKLIDILKGDRKIRLFEDVKHPVNRWILTEDSRIMETITTHMDNYEVSKARTALDTFFWNVFCDNYLEMIKPIIQKASAAGDYDTVDETVYTASKVMLDVAKAYAPIMPFIAEEIYQTIDFPGRKISIHVDSWPDEKRRYSDANEEVSYIVSVIDAIRSAKSAAKVSVGTRVKVASVKGRKDLIEKYRDLLSGMLRIDSMEIADGDAVDATVFP.

The short motif at 40 to 50 (PTVSGKMHMGH) is the 'HIGH' region element. The short motif at 521 to 525 (KMSKS) is the 'KMSKS' region element. Lys524 serves as a coordination point for ATP.

The protein belongs to the class-I aminoacyl-tRNA synthetase family. ValS type 2 subfamily.

It localises to the cytoplasm. It catalyses the reaction tRNA(Val) + L-valine + ATP = L-valyl-tRNA(Val) + AMP + diphosphate. In terms of biological role, catalyzes the attachment of valine to tRNA(Val). As ValRS can inadvertently accommodate and process structurally similar amino acids such as threonine, to avoid such errors, it has a 'posttransfer' editing activity that hydrolyzes mischarged Thr-tRNA(Val) in a tRNA-dependent manner. The protein is Valine--tRNA ligase of Thermoplasma acidophilum (strain ATCC 25905 / DSM 1728 / JCM 9062 / NBRC 15155 / AMRC-C165).